The following is a 673-amino-acid chain: Putative transcription factor tau subunit sfc9 (673 aa).

May be a component of the TFIIIC complex.

Its subcellular location is the nucleus. The chain is Putative transcription factor tau subunit sfc9 from Schizosaccharomyces pombe (strain 972 / ATCC 24843) (Fission yeast).